Consider the following 473-residue polypeptide: Glutamate--tRNA ligase (473 aa).

The 'HIGH' region motif lies at 13-23 (PSPTGFLHVGG). Positions 240–244 (KLSKR) match the 'KMSKS' region motif. Residue lysine 243 participates in ATP binding.

This sequence belongs to the class-I aminoacyl-tRNA synthetase family. Glutamate--tRNA ligase type 1 subfamily. In terms of assembly, monomer.

The protein localises to the cytoplasm. The enzyme catalyses tRNA(Glu) + L-glutamate + ATP = L-glutamyl-tRNA(Glu) + AMP + diphosphate. Its function is as follows. Catalyzes the attachment of glutamate to tRNA(Glu) in a two-step reaction: glutamate is first activated by ATP to form Glu-AMP and then transferred to the acceptor end of tRNA(Glu). The polypeptide is Glutamate--tRNA ligase (Shewanella denitrificans (strain OS217 / ATCC BAA-1090 / DSM 15013)).